The following is a 416-amino-acid chain: Major facilitator superfamily domain-containing protein 3 (416 aa).

A run of 12 helical transmembrane segments spans residues 10–30 (GLYL…PILL), 40–60 (VGLT…APLV), 68–88 (VWLT…AVLP), 99–119 (TTVM…DVAL), 139–158 (QVVA…LVFF), 170–190 (LTAT…LGRL), 204–224 (YLLQ…FVLT), 252–272 (LWSG…GGAL), 295–315 (LGGL…GASL), 324–344 (AALL…TATF), 365–385 (FLAT…GVLA), and 392–412 (LCFA…RLAP).

The protein belongs to the major facilitator superfamily.

It is found in the membrane. The chain is Major facilitator superfamily domain-containing protein 3 (Mfsd3) from Rattus norvegicus (Rat).